The following is a 74-amino-acid chain: Small ribosomal subunit protein eS28 (74 aa).

This sequence belongs to the eukaryotic ribosomal protein eS28 family.

This is Small ribosomal subunit protein eS28 from Halobacterium salinarum (strain ATCC 29341 / DSM 671 / R1).